The sequence spans 474 residues: Ribulose bisphosphate carboxylase large chain (474 aa).

An N6,N6,N6-trimethyllysine modification is found at Lys-13. Substrate-binding residues include Asn-122 and Thr-172. The Proton acceptor role is filled by Lys-174. Lys-176 contacts substrate. Mg(2+) contacts are provided by Lys-200, Asp-202, and Glu-203. The residue at position 200 (Lys-200) is an N6-carboxylysine. The Proton acceptor role is filled by His-293. Positions 294, 326, and 378 each coordinate substrate.

It belongs to the RuBisCO large chain family. Type I subfamily. In terms of assembly, heterohexadecamer of 8 large chains and 8 small chains; disulfide-linked. The disulfide link is formed within the large subunit homodimers. Requires Mg(2+) as cofactor. Post-translationally, the disulfide bond which can form in the large chain dimeric partners within the hexadecamer appears to be associated with oxidative stress and protein turnover.

The protein localises to the plastid. The protein resides in the chloroplast. The catalysed reaction is 2 (2R)-3-phosphoglycerate + 2 H(+) = D-ribulose 1,5-bisphosphate + CO2 + H2O. The enzyme catalyses D-ribulose 1,5-bisphosphate + O2 = 2-phosphoglycolate + (2R)-3-phosphoglycerate + 2 H(+). Its function is as follows. RuBisCO catalyzes two reactions: the carboxylation of D-ribulose 1,5-bisphosphate, the primary event in carbon dioxide fixation, as well as the oxidative fragmentation of the pentose substrate in the photorespiration process. Both reactions occur simultaneously and in competition at the same active site. The chain is Ribulose bisphosphate carboxylase large chain from Dendrophthora clavata (Columbian mistletoe).